A 377-amino-acid polypeptide reads, in one-letter code: Protein RecA (377 aa).

Residue 82–89 (GPESSGKT) participates in ATP binding. A disordered region spans residues 345-377 (EGSEVSANSMRPLASAARQASSRPNLSQVSANG). Polar residues predominate over residues 362 to 377 (RQASSRPNLSQVSANG).

Belongs to the RecA family.

It is found in the cytoplasm. In terms of biological role, can catalyze the hydrolysis of ATP in the presence of single-stranded DNA, the ATP-dependent uptake of single-stranded DNA by duplex DNA, and the ATP-dependent hybridization of homologous single-stranded DNAs. It interacts with LexA causing its activation and leading to its autocatalytic cleavage. This Prochlorococcus marinus (strain NATL2A) protein is Protein RecA.